Consider the following 151-residue polypeptide: Protein SprT-like (151 aa).

The SprT-like domain occupies 6–147 (LQRMVENLSE…GHCNGKLRMK (142 aa)). Residue His-67 participates in Zn(2+) binding. The active site involves Glu-68. Position 71 (His-71) interacts with Zn(2+).

It belongs to the SprT family. The cofactor is Zn(2+).

Its subcellular location is the cytoplasm. This chain is Protein SprT-like, found in Staphylococcus aureus (strain Mu3 / ATCC 700698).